A 398-amino-acid polypeptide reads, in one-letter code: Acetyl-CoA acetyltransferase (398 aa).

S2 is subject to N-acetylserine. C91 acts as the Acyl-thioester intermediate in catalysis. CoA-binding residues include Y186 and K231. Residue Y186 participates in K(+) binding. 3 residues coordinate K(+): A248, A249, and A251. Residue S252 coordinates CoA. K(+) is bound at residue V350. Residues H354 and C384 each act as proton acceptor in the active site.

It belongs to the thiolase-like superfamily. Thiolase family. In terms of assembly, homotetramer.

Its subcellular location is the cytoplasm. The catalysed reaction is 2 acetyl-CoA = acetoacetyl-CoA + CoA. The protein operates within metabolic intermediate biosynthesis; (R)-mevalonate biosynthesis; (R)-mevalonate from acetyl-CoA: step 1/3. Functionally, acetyl-CoA acetyltransferase; part of the first module of ergosterol biosynthesis pathway that includes the early steps of the pathway, conserved across all eukaryotes, and which results in the formation of mevalonate from acetyl-coenzyme A (acetyl-CoA). In this module, the acetyl-CoA acetyltransferase ERG10 catalyzes the formation of acetoacetyl-CoA. The hydroxymethylglutaryl-CoA synthase ERG13 then condenses acetyl-CoA with acetoacetyl-CoA to form HMG-CoA. The rate-limiting step of the early module is the reduction to mevalonate by the 3-hydroxy-3-methylglutaryl-coenzyme A (HMG-CoA) reductases HMG1 and HMG2 which are derived from a single ancestral HMGR gene by gene duplication. This is Acetyl-CoA acetyltransferase from Saccharomyces pastorianus (strain ATCC 76670 / Carlsberg bottom yeast no.2 / CBS 1503 / CLIB 180 / NBRC 10610 / NRRL Y-1525) (Saaz-type lager yeast).